The sequence spans 217 residues: Chaperone protein TorD (217 aa).

The protein belongs to the TorD/DmsD family. TorD subfamily.

The protein localises to the cytoplasm. Functionally, involved in the biogenesis of TorA. Acts on TorA before the insertion of the molybdenum cofactor and, as a result, probably favors a conformation of the apoenzyme that is competent for acquiring the cofactor. In Shewanella oneidensis (strain ATCC 700550 / JCM 31522 / CIP 106686 / LMG 19005 / NCIMB 14063 / MR-1), this protein is Chaperone protein TorD.